A 318-amino-acid chain; its full sequence is Aspartate carbamoyltransferase catalytic subunit (318 aa).

2 residues coordinate carbamoyl phosphate: R59 and T60. K87 provides a ligand contact to L-aspartate. Residues R109, H137, and Q140 each contribute to the carbamoyl phosphate site. L-aspartate is bound by residues R170 and R224. Carbamoyl phosphate is bound by residues G265 and P266.

It belongs to the aspartate/ornithine carbamoyltransferase superfamily. ATCase family. In terms of assembly, heterododecamer (2C3:3R2) of six catalytic PyrB chains organized as two trimers (C3), and six regulatory PyrI chains organized as three dimers (R2).

It carries out the reaction carbamoyl phosphate + L-aspartate = N-carbamoyl-L-aspartate + phosphate + H(+). Its pathway is pyrimidine metabolism; UMP biosynthesis via de novo pathway; (S)-dihydroorotate from bicarbonate: step 2/3. Functionally, catalyzes the condensation of carbamoyl phosphate and aspartate to form carbamoyl aspartate and inorganic phosphate, the committed step in the de novo pyrimidine nucleotide biosynthesis pathway. The sequence is that of Aspartate carbamoyltransferase catalytic subunit from Rhizobium etli (strain CIAT 652).